Consider the following 389-residue polypeptide: Carbamoyl phosphate synthase small chain (389 aa).

The interval 1–197 (MMSSPAKAAK…AAKDASIGDD (197 aa)) is CPSase. L-glutamine is bound by residues S51, G249, and G251. The Glutamine amidotransferase type-1 domain occupies 201-387 (HVVCMDFGMK…QEQLNEKCGV (187 aa)). C276 acts as the Nucleophile in catalysis. Residues L277, Q280, N318, G320, and F321 each contribute to the L-glutamine site. Catalysis depends on residues H360 and E362.

This sequence belongs to the CarA family. As to quaternary structure, composed of two chains; the small (or glutamine) chain promotes the hydrolysis of glutamine to ammonia, which is used by the large (or ammonia) chain to synthesize carbamoyl phosphate. Tetramer of heterodimers (alpha,beta)4.

The catalysed reaction is hydrogencarbonate + L-glutamine + 2 ATP + H2O = carbamoyl phosphate + L-glutamate + 2 ADP + phosphate + 2 H(+). The enzyme catalyses L-glutamine + H2O = L-glutamate + NH4(+). Its pathway is amino-acid biosynthesis; L-arginine biosynthesis; carbamoyl phosphate from bicarbonate: step 1/1. It functions in the pathway pyrimidine metabolism; UMP biosynthesis via de novo pathway; (S)-dihydroorotate from bicarbonate: step 1/3. Its function is as follows. Small subunit of the glutamine-dependent carbamoyl phosphate synthetase (CPSase). CPSase catalyzes the formation of carbamoyl phosphate from the ammonia moiety of glutamine, carbonate, and phosphate donated by ATP, constituting the first step of 2 biosynthetic pathways, one leading to arginine and/or urea and the other to pyrimidine nucleotides. The small subunit (glutamine amidotransferase) binds and cleaves glutamine to supply the large subunit with the substrate ammonia. This is Carbamoyl phosphate synthase small chain from Rhodopirellula baltica (strain DSM 10527 / NCIMB 13988 / SH1).